The primary structure comprises 292 residues: Homoserine kinase (292 aa).

84 to 94 contacts ATP; the sequence is PISRGLGSSSA.

This sequence belongs to the GHMP kinase family. Homoserine kinase subfamily.

Its subcellular location is the cytoplasm. The enzyme catalyses L-homoserine + ATP = O-phospho-L-homoserine + ADP + H(+). The protein operates within amino-acid biosynthesis; L-threonine biosynthesis; L-threonine from L-aspartate: step 4/5. Its function is as follows. Catalyzes the ATP-dependent phosphorylation of L-homoserine to L-homoserine phosphate. This Sulfurovum sp. (strain NBC37-1) protein is Homoserine kinase.